Reading from the N-terminus, the 440-residue chain is Chromosome partition protein MukF (440 aa).

The interval 208–236 is leucine-zipper; that stretch reads LSETSGTLRELQDTLEAAGDKLQANLLQI.

This sequence belongs to the MukF family. As to quaternary structure, interacts, and probably forms a ternary complex, with MukE and MukB via its C-terminal region. The complex formation is stimulated by calcium or magnesium. It is required for an interaction between MukE and MukB.

Its subcellular location is the cytoplasm. It localises to the nucleoid. Its function is as follows. Involved in chromosome condensation, segregation and cell cycle progression. May participate in facilitating chromosome segregation by condensation DNA from both sides of a centrally located replisome during cell division. Not required for mini-F plasmid partitioning. Probably acts via its interaction with MukB and MukE. Overexpression results in anucleate cells. It has a calcium binding activity. The sequence is that of Chromosome partition protein MukF from Cronobacter sakazakii (strain ATCC BAA-894) (Enterobacter sakazakii).